The primary structure comprises 365 residues: NAD(P)H-quinone oxidoreductase subunit 1, chloroplastic (365 aa).

Transmembrane regions (helical) follow at residues 32–52 (LFPI…IVWL), 98–118 (YLFS…YLII), 129–149 (LSIG…GLLM), 257–279 (LFYV…LYLG), 302–322 (VFGT…FLFI), and 338–358 (LLNL…LLTT).

It belongs to the complex I subunit 1 family. NDH is composed of at least 16 different subunits, 5 of which are encoded in the nucleus.

It localises to the plastid. Its subcellular location is the chloroplast thylakoid membrane. The enzyme catalyses a plastoquinone + NADH + (n+1) H(+)(in) = a plastoquinol + NAD(+) + n H(+)(out). It catalyses the reaction a plastoquinone + NADPH + (n+1) H(+)(in) = a plastoquinol + NADP(+) + n H(+)(out). Its function is as follows. NDH shuttles electrons from NAD(P)H:plastoquinone, via FMN and iron-sulfur (Fe-S) centers, to quinones in the photosynthetic chain and possibly in a chloroplast respiratory chain. The immediate electron acceptor for the enzyme in this species is believed to be plastoquinone. Couples the redox reaction to proton translocation, and thus conserves the redox energy in a proton gradient. This chain is NAD(P)H-quinone oxidoreductase subunit 1, chloroplastic, found in Spinacia oleracea (Spinach).